Here is a 588-residue protein sequence, read N- to C-terminus: Aspartate--tRNA(Asp/Asn) ligase (588 aa).

Glu172 is a binding site for L-aspartate. Residues 196–199 (QLFK) are aspartate. Arg218 is a binding site for L-aspartate. Residues 218-220 (RDE) and Gln227 contribute to the ATP site. His450 lines the L-aspartate pocket. Glu484 contributes to the ATP binding site. Residue Arg491 participates in L-aspartate binding. 536-539 (GLDR) lines the ATP pocket.

Belongs to the class-II aminoacyl-tRNA synthetase family. Type 1 subfamily. As to quaternary structure, homodimer.

It is found in the cytoplasm. It carries out the reaction tRNA(Asx) + L-aspartate + ATP = L-aspartyl-tRNA(Asx) + AMP + diphosphate. Its function is as follows. Aspartyl-tRNA synthetase with relaxed tRNA specificity since it is able to aspartylate not only its cognate tRNA(Asp) but also tRNA(Asn). Reaction proceeds in two steps: L-aspartate is first activated by ATP to form Asp-AMP and then transferred to the acceptor end of tRNA(Asp/Asn). The chain is Aspartate--tRNA(Asp/Asn) ligase from Nitrosospira multiformis (strain ATCC 25196 / NCIMB 11849 / C 71).